Reading from the N-terminus, the 112-residue chain is Type III inner-rod protein PscI (112 aa).

Belongs to the YscI/HrpB family. As to quaternary structure, homomultimer (through its C-terminal region).

In terms of biological role, component of the type III secretion (T3S) injectisome that translocates effector toxins into host cells, facilitating the establishment and dissemination of infection. Polymerizes into flexible and regularly twisted fibrils and plays an essential role in needle assembly. This is Type III inner-rod protein PscI (pscI) from Pseudomonas aeruginosa (strain ATCC 15692 / DSM 22644 / CIP 104116 / JCM 14847 / LMG 12228 / 1C / PRS 101 / PAO1).